Here is a 424-residue protein sequence, read N- to C-terminus: Light-independent protochlorophyllide reductase subunit N (424 aa).

Residues Cys-26, Cys-51, and Cys-112 each contribute to the [4Fe-4S] cluster site.

This sequence belongs to the BchN/ChlN family. In terms of assembly, protochlorophyllide reductase is composed of three subunits; BchL, BchN and BchB. Forms a heterotetramer of two BchB and two BchN subunits. Requires [4Fe-4S] cluster as cofactor.

The catalysed reaction is chlorophyllide a + oxidized 2[4Fe-4S]-[ferredoxin] + 2 ADP + 2 phosphate = protochlorophyllide a + reduced 2[4Fe-4S]-[ferredoxin] + 2 ATP + 2 H2O. Its pathway is porphyrin-containing compound metabolism; bacteriochlorophyll biosynthesis (light-independent). In terms of biological role, component of the dark-operative protochlorophyllide reductase (DPOR) that uses Mg-ATP and reduced ferredoxin to reduce ring D of protochlorophyllide (Pchlide) to form chlorophyllide a (Chlide). This reaction is light-independent. The NB-protein (BchN-BchB) is the catalytic component of the complex. The chain is Light-independent protochlorophyllide reductase subunit N from Rhodobacter capsulatus (strain ATCC BAA-309 / NBRC 16581 / SB1003).